Consider the following 750-residue polypeptide: Photosystem I P700 chlorophyll a apoprotein A1 (750 aa).

Transmembrane regions (helical) follow at residues 70–93 (IFSA…FHGA), 156–179 (LYCT…FHYH), 195–219 (LNHH…HVSL), 291–309 (IAHH…GHMY), 346–369 (WHAQ…HHMY), 385–411 (LSLF…IFMV), 433–455 (AIIS…LYIH), and 531–549 (FLVH…LILL). Cys-573 and Cys-582 together coordinate [4Fe-4S] cluster. 2 helical membrane passes run 589–610 (HVFL…HFSW) and 664–686 (LSAY…MFLF). His-675 lines the chlorophyll a' pocket. The chlorophyll a site is built by Met-683 and Tyr-691. Trp-692 contributes to the phylloquinone binding site. A helical membrane pass occupies residues 724–744 (AVGVTHYLLGGIATTWAFFLA).

It belongs to the PsaA/PsaB family. The PsaA/B heterodimer binds the P700 chlorophyll special pair and subsequent electron acceptors. PSI consists of a core antenna complex that captures photons, and an electron transfer chain that converts photonic excitation into a charge separation. The eukaryotic PSI reaction center is composed of at least 11 subunits. P700 is a chlorophyll a/chlorophyll a' dimer, A0 is one or more chlorophyll a, A1 is one or both phylloquinones and FX is a shared 4Fe-4S iron-sulfur center. is required as a cofactor.

The protein resides in the plastid. It is found in the chloroplast thylakoid membrane. The enzyme catalyses reduced [plastocyanin] + hnu + oxidized [2Fe-2S]-[ferredoxin] = oxidized [plastocyanin] + reduced [2Fe-2S]-[ferredoxin]. Functionally, psaA and PsaB bind P700, the primary electron donor of photosystem I (PSI), as well as the electron acceptors A0, A1 and FX. PSI is a plastocyanin-ferredoxin oxidoreductase, converting photonic excitation into a charge separation, which transfers an electron from the donor P700 chlorophyll pair to the spectroscopically characterized acceptors A0, A1, FX, FA and FB in turn. Oxidized P700 is reduced on the lumenal side of the thylakoid membrane by plastocyanin. The protein is Photosystem I P700 chlorophyll a apoprotein A1 of Gossypium hirsutum (Upland cotton).